The primary structure comprises 374 residues: DNA primase small subunit PriS (374 aa).

Residues D99, D101, and D281 contribute to the active site.

It belongs to the eukaryotic-type primase small subunit family. As to quaternary structure, heterodimer of a small subunit (PriS) and a large subunit (PriL). The cofactor is Mg(2+). Mn(2+) serves as cofactor.

In terms of biological role, catalytic subunit of DNA primase, an RNA polymerase that catalyzes the synthesis of short RNA molecules used as primers for DNA polymerase during DNA replication. The small subunit contains the primase catalytic core and has DNA synthesis activity on its own. Binding to the large subunit stabilizes and modulates the activity, increasing the rate of DNA synthesis while decreasing the length of the DNA fragments, and conferring RNA synthesis capability. The DNA polymerase activity may enable DNA primase to also catalyze primer extension after primer synthesis. May also play a role in DNA repair. This is DNA primase small subunit PriS from Methanoregula boonei (strain DSM 21154 / JCM 14090 / 6A8).